Reading from the N-terminus, the 828-residue chain is Neurotrophin receptor-interacting factor 1 (828 aa).

The 72-residue stretch at 14 to 85 folds into the KRAB 1 domain; sequence VKFEDVSLTF…QREIPQDTLP (72 aa). A Glycyl lysine isopeptide (Lys-Gly) (interchain with G-Cter in ubiquitin) cross-link involves residue lysine 15. Residues 158–240 enclose the SCAN box domain; sequence RQKFRHFQYE…ALLENMTSVS (83 aa). Residues 280–370 enclose the KRAB 2 domain; it reads VTFQDVAVDF…ESILEDGVKE (91 aa). Disordered stretches follow at residues 328–355, 377–490, and 575–611; these read RELT…RNGT, NQVG…DPIT, and QKGY…LSTS. Polar residues predominate over residues 345–355; sequence PNTNDLSRNGT. Residues 384 to 394 are compositionally biased toward basic and acidic residues; it reads EKGHPQKKFSE. Residues 418-433 show a composition bias toward basic residues; the sequence is KYVKVKQKGTGKRKGR. Over residues 458–478 the composition is skewed to polar residues; sequence RSGSTPVTHGSSIKKQQQGSE. Residues 589-599 are compositionally biased toward basic residues; the sequence is SWKHIKPHQKG. The span at 600–611 shows a compositional bias: basic and acidic residues; that stretch reads SKGERVEELSTS. C2H2-type zinc fingers lie at residues 684 to 706, 712 to 734, 740 to 762, 768 to 790, and 796 to 818; these read CRCS…KKIH, YMCM…LRIH, FECS…LRTH, YHCE…ERTH, and YVCI…QKTH.

This sequence belongs to the krueppel C2H2-type zinc-finger protein family. Interacts with NGFR/p75(NTR). Interacts (via KRAB 1 domain) with TRAF6. Interacts (when ubiquitinated at Lys-15) with SQSTM1/p62. In terms of processing, ubiquitinated by TRAF6 at Lys-15 through 'Lys-63'-linked polyubiquitination. 'Lys-63'-linked polyubiquitination occurs in response to NGFR/p75(NTR) cleavage by gamma-secretase and promotes binding with the ICD cleavage product of NGFR/p75(NTR), followed by translocation into the nucleus and subsequent apoptosis. In terms of tissue distribution, ubiquitously expressed at low level. Expressed at higher level in testis.

The protein resides in the cytoplasm. The protein localises to the nucleus. In terms of biological role, transcription regulator involved in NGFR/p75(NTR)-mediated apoptosis. Essential component of the NGFR/p75(NTR) apoptotic pathway: upon ligand-binding and subsequent cleavage of NGFR/p75(NTR), binds to the intracellular domain (ICD) cleavage product of NGFR/p75(NTR), translocates to the nucleus and induces apoptosis, possibly by regulating expression of key regulators of apoptosis. Induces NGFR/p75(NTR)-mediated apoptosis in retina and sympathetic neurons. May also regulate expression of neuronal cholesterol biosynthesis genes. Probably acts as a transcription repressor: specifically binds to the 3'-end of zinc-finger coding genes and recruiting chromatin-modifying proteins such as SETDB1 and TRIM28/KAP1, leading to transcription repression. This is Neurotrophin receptor-interacting factor 1 (Nrif1) from Mus musculus (Mouse).